Reading from the N-terminus, the 372-residue chain is N-methyl-L-tryptophan oxidase (372 aa).

4–34 provides a ligand contact to FAD; it reads DLIIIGSGSVGAAAGYYATRAGLNVLMTDAH. The residue at position 308 (C308) is an S-8alpha-FAD cysteine.

Belongs to the MSOX/MTOX family. MTOX subfamily. In terms of assembly, monomer. FAD serves as cofactor.

It carries out the reaction N(alpha)-methyl-L-tryptophan + O2 + H2O = L-tryptophan + formaldehyde + H2O2. Catalyzes the oxidative demethylation of N-methyl-L-tryptophan. The sequence is that of N-methyl-L-tryptophan oxidase from Escherichia coli O1:K1 / APEC.